The following is a 79-amino-acid chain: Small ribosomal subunit protein bS18 (79 aa).

This sequence belongs to the bacterial ribosomal protein bS18 family. In terms of assembly, part of the 30S ribosomal subunit. Forms a tight heterodimer with protein bS6.

In terms of biological role, binds as a heterodimer with protein bS6 to the central domain of the 16S rRNA, where it helps stabilize the platform of the 30S subunit. This is Small ribosomal subunit protein bS18 from Afipia carboxidovorans (strain ATCC 49405 / DSM 1227 / KCTC 32145 / OM5) (Oligotropha carboxidovorans).